The primary structure comprises 426 residues: Serine--tRNA ligase (426 aa).

A disordered region spans residues 103–129; it reads VPNLPDDSVPTGKDENDNPEIRRWGTP. The segment covering 114–125 has biased composition (basic and acidic residues); it reads GKDENDNPEIRR. 230–232 provides a ligand contact to L-serine; that stretch reads TAE. Residue 261–263 coordinates ATP; the sequence is RSE. E284 contacts L-serine. 348–351 serves as a coordination point for ATP; that stretch reads EISS. S384 is a binding site for L-serine.

The protein belongs to the class-II aminoacyl-tRNA synthetase family. Type-1 seryl-tRNA synthetase subfamily. Homodimer. The tRNA molecule binds across the dimer.

It is found in the cytoplasm. It catalyses the reaction tRNA(Ser) + L-serine + ATP = L-seryl-tRNA(Ser) + AMP + diphosphate + H(+). It carries out the reaction tRNA(Sec) + L-serine + ATP = L-seryl-tRNA(Sec) + AMP + diphosphate + H(+). It functions in the pathway aminoacyl-tRNA biosynthesis; selenocysteinyl-tRNA(Sec) biosynthesis; L-seryl-tRNA(Sec) from L-serine and tRNA(Sec): step 1/1. Catalyzes the attachment of serine to tRNA(Ser). Is also able to aminoacylate tRNA(Sec) with serine, to form the misacylated tRNA L-seryl-tRNA(Sec), which will be further converted into selenocysteinyl-tRNA(Sec). The polypeptide is Serine--tRNA ligase (Dichelobacter nodosus (strain VCS1703A)).